Reading from the N-terminus, the 670-residue chain is Septation protein 7 (670 aa).

Residues 33-357 (KGIKFTFMVV…ETYRTERLTK (325 aa)) enclose the Septin-type G domain. The G1 motif stretch occupies residues 43–50 (GESGTGKT). Residues 43–50 (GESGTGKT), Gly137, 217–225 (KADSFTLNE), and Arg306 contribute to the GTP site. The G3 motif stretch occupies residues 134–137 (DTPG). Residues 216 to 219 (GKAD) are G4 motif. Disordered stretches follow at residues 383–513 (LNDS…QRNQ) and 574–670 (LNRQ…VSNH). Positions 395–404 (NNNNNNNNNN) are enriched in low complexity. The span at 405–421 (ASTIPSMSNLAQLTTST) shows a compositional bias: polar residues. Composition is skewed to low complexity over residues 433–446 (SITS…KSTS) and 463–473 (SSFTSSTSTVS). Residues 472 to 606 (VSLEGGEKEG…SVQSGGVDDG (135 aa)) adopt a coiled-coil conformation. Residues 476-487 (GGEKEGGHHDRG) show a composition bias toward basic and acidic residues. A compositionally biased stretch (low complexity) spans 489–500 (NSTSTNNNNNNN). The span at 631–645 (QSHEYDNSEYHHDDS) shows a compositional bias: basic and acidic residues.

Belongs to the TRAFAC class TrmE-Era-EngA-EngB-Septin-like GTPase superfamily. Septin GTPase family. In terms of assembly, component of the septin complex which consists of CDC3, CDC10, CDC11, CDC12 and probably SEP7. The purified septin complex appeared to have a stoichiometry of 2 CDC3, 1 to 2 CDC10, 1 CDC11, 2 CDC12, and 1 or none SEP7 subunit. Induction of hyphal growth brings about important modifications in septin ring dynamics, because the rings were found in a different state from those of yeast cells. This hyphal-specific state contains a core of stable septins (SEP7, CDC3, and CDC12), and it shows a high CDC10 turnover between the ring and the cytoplasm. Interacts with GIN4. In terms of processing, phosphorylated by GIN4 which stabilizes the GIN4-SEP7 interaction.

The protein resides in the bud neck. Its function is as follows. Septins are GTPases involved in cytokinesis that assemble early in the cell cycle as a patch at the incipient bud site and form a ring before bud emergence, which transforms into an hour-glass shaped collar of cortical filaments that spans both sides of the mother-bud neck. This collar persists until just before cytokinesis, when it splits into two rings that occupy opposite sides of the neck. The septins at the bud neck serve as a structural scaffold that recruits different components involved in diverse processes at specific stages during the cell cycle. Many proteins bind asymmetrically to the septin collar. The septin assembly is regulated by protein kinase GIN4. Septins are also involved in cell morphogenesis, chlamydospores morphogenesis, bud site selection, chitin deposition, cell cycle regulation, cell compartmentalization and spore wall formation. SEP7 is required to convert hyphal septin rings into the hyphal-specific state and is necessary for CDC10 turnover during hyphal growth. The polypeptide is Septation protein 7 (SEP7) (Candida albicans (strain SC5314 / ATCC MYA-2876) (Yeast)).